The sequence spans 619 residues: 4-hydroxyphenylalkanoate adenylyltransferase (619 aa).

This sequence belongs to the ATP-dependent AMP-binding enzyme family.

It catalyses the reaction 17-(4-hydroxyphenyl)heptadecanoate + holo-[(phenol)carboxyphthiodiolenone synthase] + ATP = 17-(4-hydroxyphenyl)heptadecanoyl-[(phenol)carboxyphthiodiolenone synthase] + AMP + diphosphate. It carries out the reaction 19-(4-hydroxyphenyl)nonadecanoate + holo-[(phenol)carboxyphthiodiolenone synthase] + ATP = 19-(4-hydroxyphenyl)nonadecanoyl-[(phenol)carboxyphthiodiolenone synthase] + AMP + diphosphate. The catalysed reaction is dodecanoate + ATP + H(+) = dodecanoyl-AMP + diphosphate. The protein operates within lipid metabolism; fatty acid biosynthesis. Catalyzes the activation of long-chain fatty acids as acyl-adenylates (acyl-AMP), which are then transferred to the multifunctional polyketide synthase PpsA for further chain extension. Involved in the biosynthesis of phenolphthiocerol, which is an important intermediate in the biosynthesis of phenolic glycolipid (PGL), also called mycosid B. This Mycobacterium tuberculosis (strain ATCC 25618 / H37Rv) protein is 4-hydroxyphenylalkanoate adenylyltransferase (fadD29).